Consider the following 334-residue polypeptide: Methionyl-tRNA formyltransferase (334 aa).

111–114 (SILP) lines the (6S)-5,6,7,8-tetrahydrofolate pocket.

The protein belongs to the Fmt family.

It carries out the reaction L-methionyl-tRNA(fMet) + (6R)-10-formyltetrahydrofolate = N-formyl-L-methionyl-tRNA(fMet) + (6S)-5,6,7,8-tetrahydrofolate + H(+). Its function is as follows. Attaches a formyl group to the free amino group of methionyl-tRNA(fMet). The formyl group appears to play a dual role in the initiator identity of N-formylmethionyl-tRNA by promoting its recognition by IF2 and preventing the misappropriation of this tRNA by the elongation apparatus. The polypeptide is Methionyl-tRNA formyltransferase (Trichormus variabilis (strain ATCC 29413 / PCC 7937) (Anabaena variabilis)).